We begin with the raw amino-acid sequence, 154 residues long: MRVALLVIGRPRHAGLADAIRDYEGRAAHYWPLDVIEVKEEPGRNLSADVVREREAERLVARLPADAVVVACDPGGVTMDSAQFARWLQEQRESARNVAFVIGGAHGLGPAVRERANRRLSLAPWTLPHEVARMVMAEQLYRAGTIIRGEPYHK.

Gly103 is a binding site for S-adenosyl-L-methionine.

It belongs to the RNA methyltransferase RlmH family. Homodimer.

It is found in the cytoplasm. The enzyme catalyses pseudouridine(1915) in 23S rRNA + S-adenosyl-L-methionine = N(3)-methylpseudouridine(1915) in 23S rRNA + S-adenosyl-L-homocysteine + H(+). In terms of biological role, specifically methylates the pseudouridine at position 1915 (m3Psi1915) in 23S rRNA. In Gemmatimonas aurantiaca (strain DSM 14586 / JCM 11422 / NBRC 100505 / T-27), this protein is Ribosomal RNA large subunit methyltransferase H.